Reading from the N-terminus, the 47-residue chain is Delta-actitoxin-Axm1d (47 aa).

Intrachain disulfides connect Cys-4–Cys-44, Cys-6–Cys-34, and Cys-27–Cys-45.

The protein belongs to the sea anemone sodium channel inhibitory toxin family. Type I subfamily.

Its subcellular location is the secreted. It is found in the nematocyst. In terms of biological role, binds specifically to voltage-gated sodium channels (Nav), thereby delaying their inactivation during signal transduction. Thus it strongly stimulates mammalian cardiac muscle contraction. In Anthopleura xanthogrammica (Giant green sea anemone), this protein is Delta-actitoxin-Axm1d.